Here is a 371-residue protein sequence, read N- to C-terminus: 4-hydroxy-3-methylbut-2-en-1-yl diphosphate synthase (flavodoxin) (371 aa).

[4Fe-4S] cluster contacts are provided by C270, C273, C305, and E312.

It belongs to the IspG family. [4Fe-4S] cluster serves as cofactor.

The enzyme catalyses (2E)-4-hydroxy-3-methylbut-2-enyl diphosphate + oxidized [flavodoxin] + H2O + 2 H(+) = 2-C-methyl-D-erythritol 2,4-cyclic diphosphate + reduced [flavodoxin]. It functions in the pathway isoprenoid biosynthesis; isopentenyl diphosphate biosynthesis via DXP pathway; isopentenyl diphosphate from 1-deoxy-D-xylulose 5-phosphate: step 5/6. In terms of biological role, converts 2C-methyl-D-erythritol 2,4-cyclodiphosphate (ME-2,4cPP) into 1-hydroxy-2-methyl-2-(E)-butenyl 4-diphosphate. The chain is 4-hydroxy-3-methylbut-2-en-1-yl diphosphate synthase (flavodoxin) from Shewanella halifaxensis (strain HAW-EB4).